Consider the following 330-residue polypeptide: Ferredoxin--NADP reductase (330 aa).

Positions 35, 43, 48, 90, 123, 285, and 326 each coordinate FAD.

This sequence belongs to the ferredoxin--NADP reductase type 2 family. In terms of assembly, homodimer. Requires FAD as cofactor.

The enzyme catalyses 2 reduced [2Fe-2S]-[ferredoxin] + NADP(+) + H(+) = 2 oxidized [2Fe-2S]-[ferredoxin] + NADPH. This is Ferredoxin--NADP reductase from Streptococcus equi subsp. zooepidemicus (strain MGCS10565).